We begin with the raw amino-acid sequence, 719 residues long: Polyribonucleotide nucleotidyltransferase (719 aa).

Mg(2+) is bound by residues aspartate 490 and aspartate 496. The KH domain occupies 557–619 (PKIEIIIIPK…KSIDAALTRI (63 aa)). Positions 629–699 (GEIYEGKIRS…KTGKFKLSHK (71 aa)) constitute an S1 motif domain.

It belongs to the polyribonucleotide nucleotidyltransferase family. Requires Mg(2+) as cofactor.

The protein resides in the cytoplasm. It catalyses the reaction RNA(n+1) + phosphate = RNA(n) + a ribonucleoside 5'-diphosphate. Functionally, involved in mRNA degradation. Catalyzes the phosphorolysis of single-stranded polyribonucleotides processively in the 3'- to 5'-direction. This is Polyribonucleotide nucleotidyltransferase from Azobacteroides pseudotrichonymphae genomovar. CFP2.